The sequence spans 305 residues: Mitochondrial citrate transporter D (305 aa).

3 Solcar repeats span residues 10 to 101 (LPFG…WGAF), 111 to 197 (QTQS…VRAQ), and 211 to 298 (RNDL…VMDF). The next 6 helical transmembrane spans lie at 16–36 (FIAG…LDVV), 78–98 (SAPI…NDSW), 118–137 (LTGA…FELV), 176–196 (TLWR…QVRA), 208–228 (QQTR…TILN), and 270–291 (LYKG…LLVV).

Belongs to the mitochondrial carrier (TC 2.A.29) family.

The protein resides in the mitochondrion inner membrane. The catalysed reaction is citrate(in) + H(+)(in) = citrate(out) + H(+)(out). Its function is as follows. Mitochondrial transporter that mediates citrate export from mitochondria to cytoplasm. Both ctpA, ctpB, and ctpD play important roles in citric acid transport across the mitochondrial membrane and function in a redundant manner. The sequence is that of Mitochondrial citrate transporter D from Aspergillus niger (strain ATCC 1015 / CBS 113.46 / FGSC A1144 / LSHB Ac4 / NCTC 3858a / NRRL 328 / USDA 3528.7).